The primary structure comprises 184 residues: Protein CPn_0803/CP_1068/CPj0803/CpB0832 (184 aa).

The protein belongs to the chlamydial CPn_0803/CT_584/TC_0873 family.

The chain is Protein CPn_0803/CP_1068/CPj0803/CpB0832 from Chlamydia pneumoniae (Chlamydophila pneumoniae).